The following is a 184-amino-acid chain: Photosystem I assembly protein Ycf4 (184 aa).

2 helical membrane passes run 19–39 and 57–77; these read ISNFCWACILFLGSLGFLLVG and IIFFPQGIVMSFYGIAGLFIS.

The protein belongs to the Ycf4 family.

It localises to the plastid. The protein resides in the chloroplast thylakoid membrane. Functionally, seems to be required for the assembly of the photosystem I complex. This Drimys granadensis protein is Photosystem I assembly protein Ycf4.